The sequence spans 178 residues: Arginine repressor (178 aa).

The tract at residues 1–20 is disordered; that stretch reads MTEAQEPEYGGPSVPQTRTA.

It belongs to the ArgR family.

It is found in the cytoplasm. Its pathway is amino-acid biosynthesis; L-arginine biosynthesis [regulation]. In terms of biological role, regulates arginine biosynthesis genes. The protein is Arginine repressor of Streptomyces griseus subsp. griseus (strain JCM 4626 / CBS 651.72 / NBRC 13350 / KCC S-0626 / ISP 5235).